The primary structure comprises 256 residues: V-type proton ATPase subunit D (256 aa).

The segment covering 211–230 has biased composition (basic and acidic residues); that stretch reads QNETAKLDAEMKLKRDRAEQ. A disordered region spans residues 211 to 256; it reads QNETAKLDAEMKLKRDRAEQDASEVAADEEPQGETLVADQEDDVIF.

Belongs to the V-ATPase D subunit family. In terms of assembly, V-ATPase is a heteromultimeric enzyme composed of a peripheral catalytic V1 complex (components A to H) attached to an integral membrane V0 proton pore complex (components: a, c, c', c'', d, e, f and VOA1). Interacts with RAV1 and RAV2 components of the RAVE complex, which are essential for the stability and assembly of V-ATPase.

The protein localises to the vacuole membrane. Its function is as follows. Subunit of the V1 complex of vacuolar(H+)-ATPase (V-ATPase), a multisubunit enzyme composed of a peripheral complex (V1) that hydrolyzes ATP and a membrane integral complex (V0) that translocates protons. V-ATPase is responsible for acidifying and maintaining the pH of intracellular compartments. This chain is V-type proton ATPase subunit D, found in Saccharomyces cerevisiae (strain ATCC 204508 / S288c) (Baker's yeast).